Consider the following 464-residue polypeptide: Non-structural protein NS-S (464 aa).

It belongs to the tospovirus NS-S protein family. Interacts with host MYC2.

Functionally, multifunctional protein that plays two independent roles: viral suppressor of host RNAi (VSR) and viral inducer of host attractiveness to insect vectors (VIA). Acts as a suppressor of RNA-mediated gene silencing, also known as post-transcriptional gene silencing (PTGS), a mechanism of plant viral defense that limits the accumulation of viral RNAs. Also inhibits signal transduction by the phytohormone jasmonate, making the infected plant more attractive to aphids, which are the second host to play a role as a dissemination vector. Acts by binding to and inhibiting MYC2 transcription factor. This is Non-structural protein NS-S (NSS) from Frankliniella occidentalis (Western flower thrips).